Consider the following 167-residue polypeptide: Protein DLS1 (167 aa).

A Phosphoserine modification is found at Ser-17.

Component of the ISW2 complex, which at least consists of ISW2, ITC1, DLS1 and DPB4.

The protein localises to the nucleus. Functionally, functions as a component of the ISW2 complex, which acts in remodeling the chromatin by catalyzing an ATP-dependent alteration in the structure of nucleosomal DNA. The ISW2 complex is involved in coordinating transcriptional repression and in inheritance of telomeric silencing. It is involved in repression of MAT a-specific genes, INO1, and early meiotic genes during mitotic growth dependent upon transcription factor UME6 and in a parallel pathway to the RPD3-SIN3 histone deacetylase complex. DLS1 is partially required for the ISW2 complex chromatin remodeling activity and is not required for its interaction with chromatin. The polypeptide is Protein DLS1 (DLS1) (Saccharomyces cerevisiae (strain ATCC 204508 / S288c) (Baker's yeast)).